The sequence spans 549 residues: Cytoplasmic trehalase (549 aa).

Substrate is bound by residues Arg-168, 175–176 (WD), Asn-212, 221–223 (RSQ), 292–294 (RDE), and Gly-324. Catalysis depends on proton donor/acceptor residues Asp-326 and Glu-509. Residue Glu-525 coordinates substrate.

The protein belongs to the glycosyl hydrolase 37 family. As to quaternary structure, monomer.

The protein resides in the cytoplasm. It carries out the reaction alpha,alpha-trehalose + H2O = alpha-D-glucose + beta-D-glucose. Its pathway is glycan degradation; trehalose degradation; D-glucose from alpha,alpha-trehalose: step 1/1. Functionally, hydrolyzes trehalose to glucose. Could be involved, in cells returning to low osmolarity conditions, in the utilization of the accumulated cytoplasmic trehalose, which was synthesized in response to high osmolarity. This Escherichia coli O81 (strain ED1a) protein is Cytoplasmic trehalase.